The following is a 557-amino-acid chain: Dihydroxy-acid dehydratase (557 aa).

Asp-78 provides a ligand contact to Mg(2+). [2Fe-2S] cluster is bound at residue Cys-119. Residues Asp-120 and Lys-121 each coordinate Mg(2+). The residue at position 121 (Lys-121) is an N6-carboxylysine. Cys-192 provides a ligand contact to [2Fe-2S] cluster. Mg(2+) is bound at residue Glu-442. Ser-468 (proton acceptor) is an active-site residue.

This sequence belongs to the IlvD/Edd family. As to quaternary structure, homodimer. It depends on [2Fe-2S] cluster as a cofactor. Requires Mg(2+) as cofactor.

It catalyses the reaction (2R)-2,3-dihydroxy-3-methylbutanoate = 3-methyl-2-oxobutanoate + H2O. The catalysed reaction is (2R,3R)-2,3-dihydroxy-3-methylpentanoate = (S)-3-methyl-2-oxopentanoate + H2O. It participates in amino-acid biosynthesis; L-isoleucine biosynthesis; L-isoleucine from 2-oxobutanoate: step 3/4. It functions in the pathway amino-acid biosynthesis; L-valine biosynthesis; L-valine from pyruvate: step 3/4. Its function is as follows. Functions in the biosynthesis of branched-chain amino acids. Catalyzes the dehydration of (2R,3R)-2,3-dihydroxy-3-methylpentanoate (2,3-dihydroxy-3-methylvalerate) into 2-oxo-3-methylpentanoate (2-oxo-3-methylvalerate) and of (2R)-2,3-dihydroxy-3-methylbutanoate (2,3-dihydroxyisovalerate) into 2-oxo-3-methylbutanoate (2-oxoisovalerate), the penultimate precursor to L-isoleucine and L-valine, respectively. The sequence is that of Dihydroxy-acid dehydratase from Bacillus thuringiensis subsp. konkukian (strain 97-27).